The primary structure comprises 117 residues: Immunoglobulin kappa variable 9-129 (117 aa).

The signal sequence occupies residues 1–22 (MDMRAPAQVFGFLLLWFPGARC). A framework-1 region spans residues 23–45 (DIQMTQSPSSLSASLGERVSLTC). C45 and C110 are joined by a disulfide. The tract at residues 46 to 56 (RASQDIHGYLN) is complementarity-determining-1. The framework-2 stretch occupies residues 57–71 (LFQQKPGETIKHLIY). A complementarity-determining-2 region spans residues 72 to 78 (ETSNLDS). Positions 79 to 110 (GVPKRFSGSRSGSDYSLIIGSLESEDFADYYC) are framework-3. The tract at residues 111 to 117 (LQYASSP) is complementarity-determining-3.

The polypeptide is Immunoglobulin kappa variable 9-129 (Mus musculus (Mouse)).